The sequence spans 167 residues: Putative N-acetylgalactosamine-6-phosphate deacetylase (167 aa).

Belongs to the metallo-dependent hydrolases superfamily. NagA family.

It carries out the reaction N-acetyl-D-galactosamine 6-phosphate + H2O = D-galactosamine 6-phosphate + acetate. The chain is Putative N-acetylgalactosamine-6-phosphate deacetylase (agaA) from Escherichia coli (strain K12).